Reading from the N-terminus, the 121-residue chain is Keratin-associated protein 1-4 (121 aa).

The protein belongs to the KRTAP type 1 family. In terms of assembly, interacts with hair keratins. As to expression, expressed in the middle/upper portions of the hair cortex, in the region termed the keratogenous zone.

Functionally, in the hair cortex, hair keratin intermediate filaments are embedded in an interfilamentous matrix, consisting of hair keratin-associated proteins (KRTAP), which are essential for the formation of a rigid and resistant hair shaft through their extensive disulfide bond cross-linking with abundant cysteine residues of hair keratins. The matrix proteins include the high-sulfur and high-glycine-tyrosine keratins. This chain is Keratin-associated protein 1-4 (KRTAP1-4), found in Homo sapiens (Human).